Here is a 449-residue protein sequence, read N- to C-terminus: Tubulin beta-6 chain (449 aa).

GTP is bound by residues glutamine 11, glutamate 69, serine 138, glycine 142, threonine 143, glycine 144, asparagine 204, and asparagine 226. Residue glutamate 69 coordinates Mg(2+). The disordered stretch occupies residues 425 to 449 (YQDATADDEGEYEEDEDEEEILDHE). Residues 429 to 449 (TADDEGEYEEDEDEEEILDHE) show a composition bias toward acidic residues.

The protein belongs to the tubulin family. Dimer of alpha and beta chains. A typical microtubule is a hollow water-filled tube with an outer diameter of 25 nm and an inner diameter of 15 nM. Alpha-beta heterodimers associate head-to-tail to form protofilaments running lengthwise along the microtubule wall with the beta-tubulin subunit facing the microtubule plus end conferring a structural polarity. Microtubules usually have 13 protofilaments but different protofilament numbers can be found in some organisms and specialized cells. Mg(2+) serves as cofactor.

The protein localises to the cytoplasm. The protein resides in the cytoskeleton. In terms of biological role, tubulin is the major constituent of microtubules, a cylinder consisting of laterally associated linear protofilaments composed of alpha- and beta-tubulin heterodimers. Microtubules grow by the addition of GTP-tubulin dimers to the microtubule end, where a stabilizing cap forms. Below the cap, tubulin dimers are in GDP-bound state, owing to GTPase activity of alpha-tubulin. This is Tubulin beta-6 chain (TUBB6) from Arabidopsis thaliana (Mouse-ear cress).